The primary structure comprises 138 residues: ATP synthase epsilon chain (138 aa).

The protein belongs to the ATPase epsilon chain family. F-type ATPases have 2 components, CF(1) - the catalytic core - and CF(0) - the membrane proton channel. CF(1) has five subunits: alpha(3), beta(3), gamma(1), delta(1), epsilon(1). CF(0) has three main subunits: a, b and c.

It localises to the cell membrane. Its function is as follows. Produces ATP from ADP in the presence of a proton gradient across the membrane. This is ATP synthase epsilon chain (atpC) from Streptococcus mutans serotype c (strain ATCC 700610 / UA159).